We begin with the raw amino-acid sequence, 116 residues long: Iron-sulfur cluster insertion protein ErpA (116 aa).

Cysteine 44, cysteine 108, and cysteine 110 together coordinate iron-sulfur cluster.

Belongs to the HesB/IscA family. In terms of assembly, homodimer. Iron-sulfur cluster serves as cofactor.

Functionally, required for insertion of 4Fe-4S clusters for at least IspG. The polypeptide is Iron-sulfur cluster insertion protein ErpA (Ectopseudomonas mendocina (strain ymp) (Pseudomonas mendocina)).